The primary structure comprises 124 residues: Fluoride-specific ion channel FluC (124 aa).

Transmembrane regions (helical) follow at residues 5–25 (ILAV…AGTW), 37–57 (ATLA…GLFL), 69–89 (GLIV…LDTL), and 99–119 (LALG…WAGL). Residues Gly76 and Thr79 each coordinate Na(+).

Belongs to the fluoride channel Fluc/FEX (TC 1.A.43) family.

It is found in the cell inner membrane. It catalyses the reaction fluoride(in) = fluoride(out). With respect to regulation, na(+) is not transported, but it plays an essential structural role and its presence is essential for fluoride channel function. Its function is as follows. Fluoride-specific ion channel. Important for reducing fluoride concentration in the cell, thus reducing its toxicity. This Pseudomonas syringae pv. tomato (strain ATCC BAA-871 / DC3000) protein is Fluoride-specific ion channel FluC.